A 260-amino-acid chain; its full sequence is Indole-3-glycerol phosphate synthase (260 aa).

The protein belongs to the TrpC family.

It catalyses the reaction 1-(2-carboxyphenylamino)-1-deoxy-D-ribulose 5-phosphate + H(+) = (1S,2R)-1-C-(indol-3-yl)glycerol 3-phosphate + CO2 + H2O. The protein operates within amino-acid biosynthesis; L-tryptophan biosynthesis; L-tryptophan from chorismate: step 4/5. The protein is Indole-3-glycerol phosphate synthase of Thermoanaerobacter sp. (strain X514).